The following is a 154-amino-acid chain: IQ domain-containing protein F3 (154 aa).

The region spanning 89 to 118 is the IQ domain; sequence QEQATVKLQSCIRMWQCRQCYRQMCNALCL.

In Homo sapiens (Human), this protein is IQ domain-containing protein F3 (IQCF3).